Reading from the N-terminus, the 85-residue chain is Probable oxaloacetate decarboxylase gamma chain (85 aa).

The helical transmembrane segment at 11-33 (AATLMVTGMAVVFIFLTILVYLV) threads the bilayer.

This sequence belongs to the OadG family. Heterotrimer of an alpha, a beta and a gamma subunit. It depends on Na(+) as a cofactor.

The protein localises to the cell membrane. It catalyses the reaction oxaloacetate + 2 Na(+)(in) + H(+) = pyruvate + 2 Na(+)(out) + CO2. Functionally, catalyzes the decarboxylation of oxaloacetate coupled to Na(+) translocation. The sequence is that of Probable oxaloacetate decarboxylase gamma chain from Vibrio parahaemolyticus serotype O3:K6 (strain RIMD 2210633).